The sequence spans 233 residues: Uridylate kinase (233 aa).

ATP is bound by residues 9 to 12 (KLSG), glycine 51, and arginine 55. Residues aspartate 69 and 130–137 (TGNPFFST) contribute to the UMP site. Asparagine 158, tyrosine 164, and aspartate 167 together coordinate ATP.

This sequence belongs to the UMP kinase family. Homohexamer.

It localises to the cytoplasm. The catalysed reaction is UMP + ATP = UDP + ADP. The protein operates within pyrimidine metabolism; CTP biosynthesis via de novo pathway; UDP from UMP (UMPK route): step 1/1. Inhibited by UTP. Functionally, catalyzes the reversible phosphorylation of UMP to UDP. This Thermus thermophilus (strain ATCC BAA-163 / DSM 7039 / HB27) protein is Uridylate kinase.